The primary structure comprises 62 residues: Alpha-conotoxin-like S1.1 (62 aa).

A signal peptide spans 1-21; sequence MGMRMMFTVFLLVVLAITVVS. A propeptide spanning residues 22–48 is cleaved from the precursor; that stretch reads FPLDRESDGANAEARTHDHEKHALDRN. Cystine bridges form between Cys-50/Cys-56 and Cys-51/Cys-61. At Cys-61 the chain carries Cysteine amide.

Belongs to the conotoxin A superfamily. In terms of tissue distribution, expressed by the venom duct.

Its subcellular location is the secreted. Functionally, alpha-conotoxins act on postsynaptic membranes, they bind to the nicotinic acetylcholine receptors (nAChR) and thus inhibit them. The sequence is that of Alpha-conotoxin-like S1.1 from Conus striatus (Striated cone).